We begin with the raw amino-acid sequence, 137 residues long: Large ribosomal subunit protein uL16 (137 aa).

This sequence belongs to the universal ribosomal protein uL16 family. Part of the 50S ribosomal subunit.

Binds 23S rRNA and is also seen to make contacts with the A and possibly P site tRNAs. This is Large ribosomal subunit protein uL16 from Mycoplasma capricolum subsp. capricolum (strain California kid / ATCC 27343 / NCTC 10154).